Here is an 80-residue protein sequence, read N- to C-terminus: MVTMEEELIAYIARALVDRPGEVTVTKSPGEGLEILQLRVASEDVGKVIGKHGRIARALRTLLSASAHASQTRYALEIID.

The KH domain maps to leucine 33–aspartate 80.

The protein belongs to the KhpA RNA-binding protein family. As to quaternary structure, forms a complex with KhpB.

The protein localises to the cytoplasm. Its function is as follows. A probable RNA chaperone. Forms a complex with KhpB which binds to cellular RNA and controls its expression. Plays a role in peptidoglycan (PG) homeostasis and cell length regulation. In Treponema pallidum (strain Nichols), this protein is RNA-binding protein KhpA.